Reading from the N-terminus, the 103-residue chain is Large ribosomal subunit protein bL25 (103 aa).

This sequence belongs to the bacterial ribosomal protein bL25 family. In terms of assembly, part of the 50S ribosomal subunit; part of the 5S rRNA/L5/L18/L25 subcomplex. Contacts the 5S rRNA. Binds to the 5S rRNA independently of L5 and L18.

In terms of biological role, this is one of the proteins that binds to the 5S RNA in the ribosome where it forms part of the central protuberance. This Blochmanniella floridana protein is Large ribosomal subunit protein bL25.